We begin with the raw amino-acid sequence, 1249 residues long: Myosin-1 (1249 aa).

Residues 1 to 40 (MGHSRRPAGGEKKSRFGRSKAAADVGDGRQAGGKPQVRKA) are disordered. The 680-residue stretch at 50 to 729 (IGVSDLTLLS…TLFALEAMRD (680 aa)) folds into the Myosin motor domain. ATP is bound at residue 143 to 150 (GESGAGKT). Ser371 carries the post-translational modification Phosphoserine. The actin-binding stretch occupies residues 418 to 500 (SIGILDIYGF…PGVFAALNDA (83 aa)). 2 consecutive IQ domains span residues 733–753 (HNMAIRIQRAWRNYLRYRTEC) and 754–779 (AIRIQRFWRRMNGGLELLKLRDQGHT). The TH1 domain occupies 787 to 979 (RRRMSILGSR…PGEPPNSVSK (193 aa)). Disordered stretches follow at residues 959-1081 (DSYK…KAKA) and 1127-1249 (EAYL…DDDW). Composition is skewed to low complexity over residues 1026–1035 (PQTAAAQPTP) and 1043–1061 (PVAAVAASHSRTSSTASAR). Residues 1062–1073 (APPPPPPAPPAA) show a composition bias toward pro residues. Residues 1074 to 1135 (AGPKKAKALY…PEAYLEEQVA (62 aa)) enclose the SH3 domain. Residues 1137-1149 (TPKPAPPPPPPVA) are compositionally biased toward pro residues. Positions 1150-1170 (PRASPAPVNGSAAVAAAKAKA) are enriched in low complexity. The span at 1199 to 1221 (VSMNSQGDSSGASGRGTPSSVSN) shows a compositional bias: polar residues. A compositionally biased stretch (low complexity) spans 1222–1235 (ASLAGGLAEALRAR).

It belongs to the TRAFAC class myosin-kinesin ATPase superfamily. Myosin family. As to quaternary structure, interacts (via IQ domains) with camA. Post-translationally, phosphorylation of the TEDS site (Ser-371) is required for the polarization of the actin cytoskeleton. Phosphorylation probably activates the myosin-I ATPase activity.

It is found in the cytoplasm. Its subcellular location is the cytoskeleton. The protein resides in the actin patch. In terms of biological role, type-I myosin implicated in the organization of the actin cytoskeleton. Required for proper actin cytoskeleton polarization. At the cell cortex, assembles in patch-like structures together with proteins from the actin-polymerizing machinery and promotes actin assembly. Functions as actin nucleation-promoting factor (NPF) for the Arp2/3 complex. Plays an important role in polarized growth, spore germination, hyphal morphogenesis, and septal wall formation. This is Myosin-1 (myoA) from Emericella nidulans (strain FGSC A4 / ATCC 38163 / CBS 112.46 / NRRL 194 / M139) (Aspergillus nidulans).